A 285-amino-acid polypeptide reads, in one-letter code: MAWFKRTQKGIQTPTEHKKDVPKGLWYKSPTGKIVDAEQLESNFYVSPEDGYHVRIGSNEYFKILFDDNKYKELDKGMTSKDPLDFEDTKKYTDRLKAAQEKTGLKDAVRCAVGKSKGNDLVIACMDFKFVGGSMGSVVGEKIARAADYALKNKLPFMIISKSGGARMQEAALSLMQLAKTSVKLAQLADAKIPYISLATDPTTGGTTASFAMLGDINISEPGALIGFAGPRVVKDTTGKDLPKDFQTSEFLKEKGFLDFITKRSELKNKINLYLDLIQNQPVRA.

The CoA carboxyltransferase N-terminal domain maps to 24-285 (GLWYKSPTGK…DLIQNQPVRA (262 aa)).

This sequence belongs to the AccD/PCCB family. In terms of assembly, acetyl-CoA carboxylase is a heterohexamer composed of biotin carboxyl carrier protein (AccB), biotin carboxylase (AccC) and two subunits each of ACCase subunit alpha (AccA) and ACCase subunit beta (AccD).

It is found in the cytoplasm. The catalysed reaction is N(6)-carboxybiotinyl-L-lysyl-[protein] + acetyl-CoA = N(6)-biotinyl-L-lysyl-[protein] + malonyl-CoA. The protein operates within lipid metabolism; malonyl-CoA biosynthesis; malonyl-CoA from acetyl-CoA: step 1/1. Component of the acetyl coenzyme A carboxylase (ACC) complex. Biotin carboxylase (BC) catalyzes the carboxylation of biotin on its carrier protein (BCCP) and then the CO(2) group is transferred by the transcarboxylase to acetyl-CoA to form malonyl-CoA. The sequence is that of Acetyl-coenzyme A carboxylase carboxyl transferase subunit beta from Christiangramia forsetii (strain DSM 17595 / CGMCC 1.15422 / KT0803) (Gramella forsetii).